We begin with the raw amino-acid sequence, 355 residues long: Protein RecA (355 aa).

67–74 (GPESSGKT) is an ATP binding site.

Belongs to the RecA family.

It is found in the cytoplasm. Can catalyze the hydrolysis of ATP in the presence of single-stranded DNA, the ATP-dependent uptake of single-stranded DNA by duplex DNA, and the ATP-dependent hybridization of homologous single-stranded DNAs. It interacts with LexA causing its activation and leading to its autocatalytic cleavage. The chain is Protein RecA from Histophilus somni (strain 129Pt) (Haemophilus somnus).